The primary structure comprises 200 residues: Ras-related protein RABF2a (200 aa).

Position 17–25 (17–25 (GDVGAGKSS)) interacts with GTP. The short motif at 39 to 47 (QESTIGAAF) is the Effector region element. GTP contacts are provided by residues 65 to 69 (DTAGQ), 123 to 126 (NKAD), and 153 to 154 (SA). 2 S-geranylgeranyl cysteine lipidation sites follow: Cys198 and Cys199.

It belongs to the small GTPase superfamily. Rab family. Interacts with VPS9A. Interacts with EREX (via PX domain). Binds to VPS3. In terms of tissue distribution, high in stem, root, and inflorescence.

The protein localises to the endosome membrane. The protein resides in the prevacuolar compartment membrane. Involved in the trafficking of soluble cargo proteins from the prevacuolar compartment to the central vacuole. Involved in vacuolar transport of storage proteins with EREX as effector. Regulates membrane trafficking to protein storage vacuoles (PSVs). This is Ras-related protein RABF2a (RABF2A) from Arabidopsis thaliana (Mouse-ear cress).